Here is a 67-residue protein sequence, read N- to C-terminus: MDTRLMDLLVCPLCKGPLAHDHATHELVCKADRLAFPIRDGIAVMLESQARSIDQPAAESAPADLSS.

This sequence belongs to the UPF0434 family.

This is UPF0434 protein Lcho_2556 from Leptothrix cholodnii (strain ATCC 51168 / LMG 8142 / SP-6) (Leptothrix discophora (strain SP-6)).